Consider the following 305-residue polypeptide: 17-beta-hydroxysteroid dehydrogenase type 3 (305 aa).

44-73 (GQWAVITGAGDGIGKAYSFELARHGLNVVL) lines the NADP(+) pocket. S181 contacts substrate. The active-site Proton acceptor is the Y194.

Belongs to the short-chain dehydrogenases/reductases (SDR) family. 17-beta-HSD 3 subfamily. In terms of tissue distribution, expressed in the testes.

It is found in the endoplasmic reticulum. The catalysed reaction is a 17beta-hydroxy steroid + NADP(+) = a 17-oxo steroid + NADPH + H(+). It catalyses the reaction testosterone + NADP(+) = androst-4-ene-3,17-dione + NADPH + H(+). It carries out the reaction 17beta-estradiol + NADP(+) = estrone + NADPH + H(+). The enzyme catalyses 3beta-hydroxyandrost-5-en-17-one + NADPH + H(+) = androst-5-en-3beta,17beta-diol + NADP(+). The catalysed reaction is 17beta-hydroxy-5alpha-androstan-3-one + NADP(+) = 5alpha-androstan-3,17-dione + NADPH + H(+). It catalyses the reaction androsterone + NADPH + H(+) = 5alpha-androstane-3alpha,17beta-diol + NADP(+). It carries out the reaction 3beta-hydroxy-5alpha-androstan-17-one + NADPH + H(+) = 5alpha-androstane-3beta,17beta-diol + NADP(+). The enzyme catalyses androst-4-ene-3,11,17-trione + NADPH + H(+) = 17beta-hydroxyandrost-4-ene-3,11-dione + NADP(+). The catalysed reaction is 11beta-hydroxyandrost-4-ene-3,17-dione + NADPH + H(+) = 11beta,17beta-dihydroxyandrost-4-ene-3-one + NADP(+). It functions in the pathway hormone biosynthesis; testosterone biosynthesis. The protein operates within steroid metabolism. Catalyzes the conversion of 17-oxosteroids to 17beta-hydroxysteroids. Favors the reduction of androstenedione to testosterone. Testosterone is the key androgen driving male development and function. Uses NADPH while the two other EDH17B enzymes use NADH. Androgens such as epiandrosterone, dehydroepiandrosterone, androsterone and androstanedione are accepted as substrates and reduced at C-17. Can reduce 11-ketoandrostenedione as well as 11beta-hydroxyandrostenedione at C-17 to the respective testosterone forms. Plays a role in the rate-limiting-step for the maximum level of testosterone production by the testis but does not affect basal testosterone production. This Mus musculus (Mouse) protein is 17-beta-hydroxysteroid dehydrogenase type 3.